The chain runs to 506 residues: Glycerol kinase (506 aa).

Residue Thr-14 coordinates ADP. Thr-14, Thr-15, and Ser-16 together coordinate ATP. Thr-14 is a binding site for sn-glycerol 3-phosphate. An ADP-binding site is contributed by Arg-18. The sn-glycerol 3-phosphate site is built by Arg-84, Glu-85, and Tyr-136. Glycerol is bound by residues Arg-84, Glu-85, and Tyr-136. His-232 carries the post-translational modification Phosphohistidine; by HPr. Residue Asp-246 participates in sn-glycerol 3-phosphate binding. Glycerol-binding residues include Asp-246 and Gln-247. ADP-binding residues include Thr-268 and Gly-311. 4 residues coordinate ATP: Thr-268, Gly-311, Gln-315, and Gly-412. The ADP site is built by Gly-412 and Asn-416.

Belongs to the FGGY kinase family. Homotetramer and homodimer (in equilibrium). In terms of processing, the phosphoenolpyruvate-dependent sugar phosphotransferase system (PTS), including enzyme I, and histidine-containing protein (HPr) are required for the phosphorylation of His-232, which leads to the activation of the enzyme.

It carries out the reaction glycerol + ATP = sn-glycerol 3-phosphate + ADP + H(+). The protein operates within polyol metabolism; glycerol degradation via glycerol kinase pathway; sn-glycerol 3-phosphate from glycerol: step 1/1. With respect to regulation, activated by phosphorylation and inhibited by fructose 1,6-bisphosphate (FBP). Key enzyme in the regulation of glycerol uptake and metabolism. Catalyzes the phosphorylation of glycerol to yield sn-glycerol 3-phosphate. This chain is Glycerol kinase, found in Enterococcus casseliflavus (Enterococcus flavescens).